A 131-amino-acid chain; its full sequence is uncharacterized protein (131 aa).

Residues 15-43 (QLQAEHGSAPSNIASGPSSNQQQQEVQDE) are disordered. The span at 23 to 34 (APSNIASGPSSN) shows a compositional bias: polar residues.

It belongs to the PDCD5 family.

This is an uncharacterized protein from Schizosaccharomyces pombe (strain 972 / ATCC 24843) (Fission yeast).